A 298-amino-acid chain; its full sequence is N-acetylmuramic acid 6-phosphate etherase (298 aa).

The 164-residue stretch at 55 to 218 (IHAQVSGGGR…STGLMIKSGK (164 aa)) folds into the SIS domain. Glu-83 functions as the Proton donor in the catalytic mechanism. Glu-114 is a catalytic residue.

Belongs to the GCKR-like family. MurNAc-6-P etherase subfamily. In terms of assembly, homodimer.

It carries out the reaction N-acetyl-D-muramate 6-phosphate + H2O = N-acetyl-D-glucosamine 6-phosphate + (R)-lactate. It participates in amino-sugar metabolism; 1,6-anhydro-N-acetylmuramate degradation. The protein operates within amino-sugar metabolism; N-acetylmuramate degradation. It functions in the pathway cell wall biogenesis; peptidoglycan recycling. Its function is as follows. Specifically catalyzes the cleavage of the D-lactyl ether substituent of MurNAc 6-phosphate, producing GlcNAc 6-phosphate and D-lactate. Together with AnmK, is also required for the utilization of anhydro-N-acetylmuramic acid (anhMurNAc) either imported from the medium or derived from its own cell wall murein, and thus plays a role in cell wall recycling. This Shigella sonnei (strain Ss046) protein is N-acetylmuramic acid 6-phosphate etherase.